The sequence spans 692 residues: Potassium-transporting ATPase ATP-binding subunit (692 aa).

4 helical membrane-spanning segments follow: residues 50-70 (PIMF…FLPS), 74-94 (SIPG…VLFA), 240-260 (LTLI…YLGF), and 266-286 (VLVA…LSAI). The 4-aspartylphosphate intermediate role is filled by Asp-319. ATP-binding positions include Asp-356, Glu-360, 388 to 395 (FKAETRMS), and Lys-407. The Mg(2+) site is built by Asp-530 and Asp-534. The next 3 helical transmembrane spans lie at 600–620 (FAII…LNIM), 628–648 (AILS…PLAM), and 672–692 (GGVI…GLFI).

This sequence belongs to the cation transport ATPase (P-type) (TC 3.A.3) family. Type IA subfamily. As to quaternary structure, the system is composed of three essential subunits: KdpA, KdpB and KdpC.

The protein resides in the cell membrane. It catalyses the reaction K(+)(out) + ATP + H2O = K(+)(in) + ADP + phosphate + H(+). Its function is as follows. Part of the high-affinity ATP-driven potassium transport (or Kdp) system, which catalyzes the hydrolysis of ATP coupled with the electrogenic transport of potassium into the cytoplasm. This subunit is responsible for energy coupling to the transport system and for the release of the potassium ions to the cytoplasm. This Bacillus thuringiensis (strain Al Hakam) protein is Potassium-transporting ATPase ATP-binding subunit.